Reading from the N-terminus, the 323-residue chain is tRNA(Ile)-lysidine synthase (323 aa).

Residue 33-38 participates in ATP binding; it reads SGGPDS.

It belongs to the tRNA(Ile)-lysidine synthase family.

Its subcellular location is the cytoplasm. It catalyses the reaction cytidine(34) in tRNA(Ile2) + L-lysine + ATP = lysidine(34) in tRNA(Ile2) + AMP + diphosphate + H(+). In terms of biological role, ligates lysine onto the cytidine present at position 34 of the AUA codon-specific tRNA(Ile) that contains the anticodon CAU, in an ATP-dependent manner. Cytidine is converted to lysidine, thus changing the amino acid specificity of the tRNA from methionine to isoleucine. The polypeptide is tRNA(Ile)-lysidine synthase (Mycobacterium bovis (strain ATCC BAA-935 / AF2122/97)).